The following is a 183-amino-acid chain: Intermembrane phospholipid transport system binding protein MlaD (183 aa).

Residues M1–E7 lie on the Cytoplasmic side of the membrane. Residues I8–A28 traverse the membrane as a helical; Signal-anchor for type II membrane protein segment. Over A29–K183 the chain is Periplasmic. An MCE/MlaD region spans residues T39–V116. Residues K155 to K183 are disordered. The segment covering N172–K183 has biased composition (polar residues).

It belongs to the MlaD family. In terms of assembly, the complex is composed of two ATP-binding proteins (MlaF), two transmembrane proteins (MlaE), two cytoplasmic solute-binding proteins (MlaB) and six periplasmic solute-binding proteins (MlaD).

The protein resides in the cell inner membrane. Part of the ABC transporter complex MlaFEDB, which is involved in a phospholipid transport pathway that maintains lipid asymmetry in the outer membrane by retrograde trafficking of phospholipids from the outer membrane to the inner membrane. MlaD functions in substrate binding with strong affinity for phospholipids and modulates ATP hydrolytic activity of the complex. The chain is Intermembrane phospholipid transport system binding protein MlaD from Escherichia coli O157:H7.